The sequence spans 79 residues: UPF0154 protein SAK_1616 (79 aa).

The chain crosses the membrane as a helical span at residues 5-25 (IWILLIIVALFGGLVGGIFIA).

It belongs to the UPF0154 family.

Its subcellular location is the cell membrane. The polypeptide is UPF0154 protein SAK_1616 (Streptococcus agalactiae serotype Ia (strain ATCC 27591 / A909 / CDC SS700)).